The following is a 158-amino-acid chain: ATP synthase subunit delta, mitochondrial (158 aa).

A mitochondrion-targeting transit peptide spans 1–22 (MFRLTSARALFRVANVAARRTY).

Belongs to the ATPase epsilon chain family. As to quaternary structure, F-type ATPases have 2 components, CF(1) - the catalytic core - and CF(0) - the membrane proton channel. CF(1) has five subunits: alpha(3), beta(3), gamma(1), delta(1), epsilon(1). CF(0) has three main subunits: a, b and c.

The protein resides in the mitochondrion. The protein localises to the mitochondrion inner membrane. Mitochondrial membrane ATP synthase (F(1)F(0) ATP synthase or Complex V) produces ATP from ADP in the presence of a proton gradient across the membrane which is generated by electron transport complexes of the respiratory chain. F-type ATPases consist of two structural domains, F(1) - containing the extramembraneous catalytic core, and F(0) - containing the membrane proton channel, linked together by a central stalk and a peripheral stalk. During catalysis, ATP turnover in the catalytic domain of F(1) is coupled via a rotary mechanism of the central stalk subunits to proton translocation. Part of the complex F(1) domain and of the central stalk which is part of the complex rotary element. Rotation of the central stalk against the surrounding alpha(3)beta(3) subunits leads to hydrolysis of ATP in three separate catalytic sites on the beta subunits. This is ATP synthase subunit delta, mitochondrial (ATP16) from Eremothecium gossypii (strain ATCC 10895 / CBS 109.51 / FGSC 9923 / NRRL Y-1056) (Yeast).